Reading from the N-terminus, the 87-residue chain is AASAGGGARSADDIIAKHCNACHGAGVLGAPKIGDTAAWKERADHQGGLDGILAKAISGINAMPPKGTCADCSDDELREAIQKMSGL.

Heme is bound by residues Cys-19, Cys-22, His-23, and Met-63. Cys-69 and Cys-72 are oxidised to a cystine.

The protein belongs to the cytochrome c family. As to quaternary structure, homodimer. In terms of processing, binds 1 heme group per subunit.

In terms of biological role, it is unreactive with cytochrome c reductase or oxidase but seems to function as an intermediate in nitrate respiration of facultative anaerobic pseudmonads. The chain is Cytochrome c5 from Ectopseudomonas mendocina (Pseudomonas mendocina).